The sequence spans 197 residues: Probable UbiX-like flavin prenyltransferase (197 aa).

FMN contacts are provided by residues 9 to 11 (GAT), S36, 87 to 90 (SMKT), and R122.

It belongs to the UbiX/PAD1 family. YclB subfamily. Homododecamer.

It carries out the reaction dimethylallyl phosphate + FMNH2 = prenylated FMNH2 + phosphate. Functionally, flavin prenyltransferase that catalyzes the synthesis of the prenylated FMN cofactor (prenyl-FMN) for phenolic acid decarboxylase C. Involved in the decarboxylation and detoxification of phenolic derivatives under both aerobic and anaerobic conditions. In Escherichia coli, this protein is Probable UbiX-like flavin prenyltransferase (ecdB).